The following is a 259-amino-acid chain: Peroxisomal membrane protein 11B (259 aa).

Lys43 carries the N6-acetyllysine modification. An interaction with PEX19, PEX11G and FIS1 and peroxisome targeting region spans residues 211–259 (VVRNACDLFIPLDKLGLWRCGPGIVGLCGLVSSILSILTLIYPWLRLKP). The chain crosses the membrane as a helical span at residues 234–254 (IVGLCGLVSSILSILTLIYPW).

This sequence belongs to the peroxin-11 family. In terms of assembly, homodimer. Heterodimer with PEX11G. Interacts with PEX19. Interacts with FIS1.

It is found in the peroxisome membrane. Functionally, involved in peroxisomal proliferation. May regulate peroxisome division by recruiting the dynamin-related GTPase DNM1L to the peroxisomal membrane. Promotes membrane protrusion and elongation on the peroxisomal surface. The chain is Peroxisomal membrane protein 11B (PEX11B) from Pongo abelii (Sumatran orangutan).